We begin with the raw amino-acid sequence, 151 residues long: Large ribosomal subunit protein bL9 (151 aa).

It belongs to the bacterial ribosomal protein bL9 family.

In terms of biological role, binds to the 23S rRNA. The sequence is that of Large ribosomal subunit protein bL9 from Rhodococcus opacus (strain B4).